The sequence spans 359 residues: MSQAALRLVDKDTMDRQKALEAAVSQIERAFGKGSIMKLGGKDQVVETEVVSTGSLGLDVALGIGGVPRGRIIEVYGPESSGKTTLALHIIAEAQKKGGTCAFVDAEHALDPSYARKLGVNLDELLISQPDAGEQALEIADTLVRSGAVDVLVVDSVAALVPRAELEGEMGDNHMGLHARLMSQALRKLTGSVSKSKTIVIFINQIRMKIGVMFGNPETTTGGNALKFYASVRMEIRRVGAIKDRDEVVGNQTRVKVVKNKLAPPFKVVDFDIMYGEGISKMGELIDLGVKANVVEKSGAWFSYNSTRIGQGRENAKTFLRENPAMAAEIEGAIRQNAGLISEALAGGPGDLDGTPVEE.

77–84 (GPESSGKT) is a binding site for ATP.

The protein belongs to the RecA family.

The protein resides in the cytoplasm. Functionally, can catalyze the hydrolysis of ATP in the presence of single-stranded DNA, the ATP-dependent uptake of single-stranded DNA by duplex DNA, and the ATP-dependent hybridization of homologous single-stranded DNAs. It interacts with LexA causing its activation and leading to its autocatalytic cleavage. The protein is Protein RecA of Paramagnetospirillum magneticum (strain ATCC 700264 / AMB-1) (Magnetospirillum magneticum).